The following is a 299-amino-acid chain: Oxygen-dependent coproporphyrinogen-III oxidase (299 aa).

Ser92 lines the substrate pocket. A divalent metal cation contacts are provided by His96 and His106. His106 (proton donor) is an active-site residue. Asn108–Arg110 is a substrate binding site. Residues His145 and His175 each coordinate a divalent metal cation. The segment at Tyr240–Glu275 is important for dimerization. Residue Gly258–Arg260 participates in substrate binding.

It belongs to the aerobic coproporphyrinogen-III oxidase family. Homodimer. A divalent metal cation serves as cofactor.

It localises to the cytoplasm. It catalyses the reaction coproporphyrinogen III + O2 + 2 H(+) = protoporphyrinogen IX + 2 CO2 + 2 H2O. It participates in porphyrin-containing compound metabolism; protoporphyrin-IX biosynthesis; protoporphyrinogen-IX from coproporphyrinogen-III (O2 route): step 1/1. In terms of biological role, involved in the heme biosynthesis. Catalyzes the aerobic oxidative decarboxylation of propionate groups of rings A and B of coproporphyrinogen-III to yield the vinyl groups in protoporphyrinogen-IX. The chain is Oxygen-dependent coproporphyrinogen-III oxidase from Klebsiella pneumoniae subsp. pneumoniae (strain ATCC 700721 / MGH 78578).